Here is a 144-residue protein sequence, read N- to C-terminus: Large ribosomal subunit protein uL13 (144 aa).

The protein belongs to the universal ribosomal protein uL13 family. In terms of assembly, part of the 50S ribosomal subunit.

In terms of biological role, this protein is one of the early assembly proteins of the 50S ribosomal subunit, although it is not seen to bind rRNA by itself. It is important during the early stages of 50S assembly. This is Large ribosomal subunit protein uL13 from Pelotomaculum thermopropionicum (strain DSM 13744 / JCM 10971 / SI).